Reading from the N-terminus, the 328-residue chain is MASQPEEGFGERLRKEVTVDTSRGVRATSTAQAVENFEGWYADQRDTQMVVEEATTGERVGFRTPNRFTPEYREMLYAKAQSLERGLREEWGDLLHTAMVTLTASTTEEDGGPRPLVDHLRDLLSSWSAVYDALRHTLEDREFEYLAIIEPTTPAGNGPAGYAHIHLGVFVKGPVVAEQFQDVLDAHVKNSEGAGREAHRAVVEDDEDEAAVSIRRSARPDREDGIENLGAYLAAYMAGEYGVEALAMPAHVRAFYAAMWATGTQWFRPSNGAQRHMQPESDDEESVEEWEMVGIAPEGDLEDEIIEVDPEQPRDDPYRRLRTPPPGG.

The tract at residues 296 to 328 is disordered; the sequence is APEGDLEDEIIEVDPEQPRDDPYRRLRTPPPGG. The span at 299-310 shows a compositional bias: acidic residues; the sequence is GDLEDEIIEVDP.

Possibly necessary for replication. This is an uncharacterized protein from Halobacterium sp. (strain GN101).